A 159-amino-acid chain; its full sequence is D-aminoacyl-tRNA deacylase (159 aa).

The Gly-cisPro motif, important for rejection of L-amino acids motif lies at 146 to 147 (GP).

It belongs to the DTD family. In terms of assembly, homodimer.

The protein localises to the cytoplasm. The catalysed reaction is glycyl-tRNA(Ala) + H2O = tRNA(Ala) + glycine + H(+). It catalyses the reaction a D-aminoacyl-tRNA + H2O = a tRNA + a D-alpha-amino acid + H(+). An aminoacyl-tRNA editing enzyme that deacylates mischarged D-aminoacyl-tRNAs. Also deacylates mischarged glycyl-tRNA(Ala), protecting cells against glycine mischarging by AlaRS. Acts via tRNA-based rather than protein-based catalysis; rejects L-amino acids rather than detecting D-amino acids in the active site. By recycling D-aminoacyl-tRNA to D-amino acids and free tRNA molecules, this enzyme counteracts the toxicity associated with the formation of D-aminoacyl-tRNA entities in vivo and helps enforce protein L-homochirality. This chain is D-aminoacyl-tRNA deacylase, found in Bifidobacterium animalis subsp. lactis (strain AD011).